The primary structure comprises 527 residues: ATP synthase subunit alpha (527 aa).

172–179 (GDRQTGKT) is a binding site for ATP.

It belongs to the ATPase alpha/beta chains family. As to quaternary structure, F-type ATPases have 2 components, CF(1) - the catalytic core - and CF(0) - the membrane proton channel. CF(1) has five subunits: alpha(3), beta(3), gamma(1), delta(1), epsilon(1). CF(0) has three main subunits: a(1), b(2) and c(9-12). The alpha and beta chains form an alternating ring which encloses part of the gamma chain. CF(1) is attached to CF(0) by a central stalk formed by the gamma and epsilon chains, while a peripheral stalk is formed by the delta and b chains.

It localises to the cell inner membrane. The catalysed reaction is ATP + H2O + 4 H(+)(in) = ADP + phosphate + 5 H(+)(out). In terms of biological role, produces ATP from ADP in the presence of a proton gradient across the membrane. The alpha chain is a regulatory subunit. The protein is ATP synthase subunit alpha of Bacteroides thetaiotaomicron (strain ATCC 29148 / DSM 2079 / JCM 5827 / CCUG 10774 / NCTC 10582 / VPI-5482 / E50).